The following is a 944-amino-acid chain: Protein unc-45 homolog A (944 aa).

A disordered region spans residues 1-25 (MTVSGPETPEPRPSDPGASSAEQLR). TPR repeat units follow at residues 21-54 (AEQL…GATP), 58-91 (AILH…DGGD), and 92-125 (VKAL…EPKN). Lys70 is subject to N6-acetyllysine. The residue at position 483 (Lys483) is an N6-acetyllysine.

In terms of assembly, interacts with PGR isoforms A and B as well as with NR3C1 in the absence of ligand, and with HSP90AB1. Binding to HSP90AB1 involves 2 UNC45A monomers per HSP90AB1 dimer. As to expression, detected in spleen, bone marrow, lung and ovary, and at lower levels in testis, kidney, heart and brain (at protein level). Ubiquitous. Detected in uterus, large intestine, kidney, spleen, lung, brain, liver and ovary.

The protein resides in the cytoplasm. It is found in the perinuclear region. Its subcellular location is the nucleus. Functionally, may act as co-chaperone for HSP90 (Potential). Prevents the stimulation of HSP90AB1 ATPase activity by AHSA1. Positive factor in promoting PGR function in the cell. May be necessary for proper folding of myosin (Potential). Necessary for normal cell proliferation. Necessary for normal myotube formation and myosin accumulation during muscle cell development. May play a role in erythropoiesis in stroma cells in the spleen. The polypeptide is Protein unc-45 homolog A (Unc45a) (Mus musculus (Mouse)).